The primary structure comprises 437 residues: tRNA-queuosine alpha-mannosyltransferase (437 aa).

The protein belongs to the glycosyltransferase group 1 family. Glycosyltransferase 4 subfamily.

It is found in the cytoplasm. It localises to the nucleus. It catalyses the reaction queuosine(34) in tRNA(Asp) + GDP-alpha-D-mannose = O-4''-alpha-D-mannosylqueuosine(34) in tRNA(Asp) + GDP + H(+). Glycosyltransferase that specifically catalyzes mannosylation of cytoplasmic tRNA(Asp) modified with queuosine at position 34 (queuosine(34)). Mannosylates the cyclopentene moiety of queuosine(34) in tRNA(Asp) to form mannosyl-queuosine(34). Mannosylation of queuosine(34) in tRNA(Asp) is required to slow-down elongation at cognate codons, GAC and GAU, thereby regulating protein translation. This is tRNA-queuosine alpha-mannosyltransferase (gtdc1) from Xenopus laevis (African clawed frog).